The sequence spans 361 residues: MVGKIAPIAVDAMGGDHAPGAIVQGAVNAARKGLPVVLVGPEARVREELARHRAASSLPLEVHPATEVVEMHDHPGQAMRRKKDNSIRVCFDLVASGRAAGMVSAGNSGAVMAGAILVLGRPEGVERPAIVSVLPALKGAPLMLDMGAVVDCRPIHLVQFALMGEVYSRRVHGVTRPRVAILSNGEEDTKGTDLTRAAAAALRRAPIDFVGYCEGRDLLTGEVDVIVTDGFTGNVALKTMEGTAKVVGEYLKRALRSTTVSKIGGLLSRAALEGMKKRIDWREVGGAPLVGVNGVGFISHGRSDALAIENAIRRAGDAARTHFIDEIARAVAPSHALLEVPADGAATEQGPTPRRIAPPRT.

The segment at 340–361 (VPADGAATEQGPTPRRIAPPRT) is disordered.

This sequence belongs to the PlsX family. Homodimer. Probably interacts with PlsY.

Its subcellular location is the cytoplasm. The enzyme catalyses a fatty acyl-[ACP] + phosphate = an acyl phosphate + holo-[ACP]. Its pathway is lipid metabolism; phospholipid metabolism. Its function is as follows. Catalyzes the reversible formation of acyl-phosphate (acyl-PO(4)) from acyl-[acyl-carrier-protein] (acyl-ACP). This enzyme utilizes acyl-ACP as fatty acyl donor, but not acyl-CoA. This Anaeromyxobacter dehalogenans (strain 2CP-1 / ATCC BAA-258) protein is Phosphate acyltransferase.